Consider the following 397-residue polypeptide: G2/mitotic-specific cyclin-B2 (397 aa).

Disordered regions lie at residues 1–20 (MALL…DTGV) and 64–97 (KVTH…PEDV). At Thr-8 the chain carries Phosphothreonine. Ser-11 carries the phosphoserine modification. Residues 64-74 (KVTHVNKQPKP) are compositionally biased toward polar residues. Residues Ser-77, Ser-98, and Ser-391 each carry the phosphoserine modification.

Belongs to the cyclin family. Cyclin AB subfamily. As to quaternary structure, interacts with the CDK1 protein kinase to form a serine/threonine kinase holoenzyme complex also known as maturation promoting factor (MPF). The cyclin subunit imparts substrate specificity to the complex.

Essential for the control of the cell cycle at the G2/M (mitosis) transition. The protein is G2/mitotic-specific cyclin-B2 (CCNB2) of Mesocricetus auratus (Golden hamster).